Here is a 201-residue protein sequence, read N- to C-terminus: 3-isopropylmalate dehydratase small subunit (201 aa).

This sequence belongs to the LeuD family. LeuD type 1 subfamily. In terms of assembly, heterodimer of LeuC and LeuD.

It catalyses the reaction (2R,3S)-3-isopropylmalate = (2S)-2-isopropylmalate. It functions in the pathway amino-acid biosynthesis; L-leucine biosynthesis; L-leucine from 3-methyl-2-oxobutanoate: step 2/4. Catalyzes the isomerization between 2-isopropylmalate and 3-isopropylmalate, via the formation of 2-isopropylmaleate. This chain is 3-isopropylmalate dehydratase small subunit, found in Sinorhizobium medicae (strain WSM419) (Ensifer medicae).